The sequence spans 338 residues: Heat-inducible transcription repressor HrcA (338 aa).

It belongs to the HrcA family.

In terms of biological role, negative regulator of class I heat shock genes (grpE-dnaK-dnaJ and groELS operons). Prevents heat-shock induction of these operons. The chain is Heat-inducible transcription repressor HrcA from Nitrosomonas europaea (strain ATCC 19718 / CIP 103999 / KCTC 2705 / NBRC 14298).